Reading from the N-terminus, the 466-residue chain is Polycomb group protein FIE1 (466 aa).

Residues 1-10 (MGPTSRNHKS) show a composition bias toward basic residues. Positions 1–71 (MGPTSRNHKS…GEGEPQETVL (71 aa)) are disordered. Residues 31-49 (SITASASASAFASPAVANS) are compositionally biased toward low complexity. 6 WD repeats span residues 167–209 (DMNE…IYKS), 212–252 (GHGG…LILV), 258–298 (GHRH…EYVE), 324–361 (IHSNYVDCTKWLGDFVLSKSVENEILLWESITKEENPG), 374–414 (PECN…PVLI), and 421–460 (QVKSAIRQTAVSFDGSTILACTEDGNIWRWDEVDHPTAPV).

This sequence belongs to the WD repeat ESC family. Interacts with EZ1 and CLF. Component of the polycomb repressive complex 2 (PRC2), which methylates 'Lys-27' residues of histone H3 (H3K27me3), leading to transcriptional repression of the affected target gene. In terms of tissue distribution, expressed specifically in seed endosperm.

In terms of biological role, polycomb group (PcG) protein. PcG proteins act by forming multiprotein complexes, which are required to maintain the transcriptionally repressive state of homeotic genes throughout development. PcG proteins are not required to initiate repression, but to maintain it during later stages of development. They act via the methylation of histones, rendering chromatin heritably changed in its expressibility. Together with EZ1 and CLF forms a complex that is involved in gene transcriptional repression by trimethylation on histone H3 'Lys-27' (H3K27me3) of target genes. Involved in the regulation of embryo and seed endosperm development. FIE1-containing PcG complex in seed endosperm regulates the expression of various transcription factors by trimethylation on histone H3 'Lys-27' (H3K27me3) of target genes. Involved in the overall expression regulation of nutrient metabolism genes, such as prolamin synthesis and seed storage protein synthesis genes. Can regulate valine, leucine and isoleucine metabolism-related genes. In Oryza sativa subsp. japonica (Rice), this protein is Polycomb group protein FIE1.